We begin with the raw amino-acid sequence, 790 residues long: B3 domain-containing transcription repressor VAL1 (790 aa).

Positions 234–260 (KPSRPAISTPPVASKSAQARIGRPPVE) are disordered. A DNA-binding region (TF-B3) is located at residues 295-396 (FEKTLSASDA…KLIMGSRKAA (102 aa)). 2 disordered regions span residues 400-429 (DMQG…SING) and 446-468 (NLNS…EKKR). The segment covering 405 to 429 (GLTNGTSTEDTSSSGVTENPPSING) has biased composition (polar residues). The segment at 538–588 (SGEQERWATCDDCSKWRRLPVDALLSFKWTCIDNVWDVSRCSCSAPEESLK) adopts a CW-type zinc-finger fold. The Zn(2+) site is built by Cys547, Cys550, Cys568, and Cys580. Residues 685-732 (LMMRRKKKQLERDVTAAEDKKKKDMELAESDKSKEEKEVNTARIDLNS) adopt a coiled-coil conformation. The disordered stretch occupies residues 689–737 (RKKKQLERDVTAAEDKKKKDMELAESDKSKEEKEVNTARIDLNSDPYNK). The span at 694–724 (LERDVTAAEDKKKKDMELAESDKSKEEKEVN) shows a compositional bias: basic and acidic residues.

In terms of assembly, interacts with SNL1. In terms of tissue distribution, expressed in flowers and at lower levels in roots, stems and leaves.

Its subcellular location is the nucleus. In terms of biological role, transcriptional repressor of gene expression involved in embryonic pathways, such as LEC1, ABI3, and FUS3. Repressor of the sugar-inducible genes involved in the seed maturation program in seedlings. Plays an essential role in regulating the transition from seed maturation to seedling growth. Functionally redundant with VAL2/HSL1. This chain is B3 domain-containing transcription repressor VAL1 (VAL1), found in Arabidopsis thaliana (Mouse-ear cress).